The primary structure comprises 259 residues: MRKRVDPPAGGRLAPGITPANSNTRISAGALPRAPAQPAPLASGNLGLNSDRLRQAMVQRLRTQGIVDERVLNAMAAVPRHLFVDEALASRAYEDAALPIGHSQTISQPWVVARMIAAVCEDRAPARVLEVGAGCGYQAAVLAQIVREVHAIERIRGLYELARGHLRALRLATRVRLIHGDGMLGVPGVAPFDAIVVAAAGLAIPQALLDQLAPGGRLIAPEGSTHQRLVLIERTGATAWSRKELEAVRFVPLRAGIQS.

Residues 1-25 are disordered; it reads MRKRVDPPAGGRLAPGITPANSNTR. Residue Ser107 is part of the active site.

The protein belongs to the methyltransferase superfamily. L-isoaspartyl/D-aspartyl protein methyltransferase family.

It is found in the cytoplasm. It catalyses the reaction [protein]-L-isoaspartate + S-adenosyl-L-methionine = [protein]-L-isoaspartate alpha-methyl ester + S-adenosyl-L-homocysteine. Its function is as follows. Catalyzes the methyl esterification of L-isoaspartyl residues in peptides and proteins that result from spontaneous decomposition of normal L-aspartyl and L-asparaginyl residues. It plays a role in the repair and/or degradation of damaged proteins. The polypeptide is Protein-L-isoaspartate O-methyltransferase (Bordetella bronchiseptica (strain ATCC BAA-588 / NCTC 13252 / RB50) (Alcaligenes bronchisepticus)).